Consider the following 304-residue polypeptide: Acetyl-coenzyme A carboxylase carboxyl transferase subunit beta (304 aa).

In terms of domain architecture, CoA carboxyltransferase N-terminal spans 25–294 (LWIKCPETGE…KAIKRDTATE (270 aa)).

It belongs to the AccD/PCCB family. In terms of assembly, acetyl-CoA carboxylase is a heterohexamer composed of biotin carboxyl carrier protein (AccB), biotin carboxylase (AccC) and two subunits each of ACCase subunit alpha (AccA) and ACCase subunit beta (AccD).

It is found in the cytoplasm. It carries out the reaction N(6)-carboxybiotinyl-L-lysyl-[protein] + acetyl-CoA = N(6)-biotinyl-L-lysyl-[protein] + malonyl-CoA. Its pathway is lipid metabolism; malonyl-CoA biosynthesis; malonyl-CoA from acetyl-CoA: step 1/1. In terms of biological role, component of the acetyl coenzyme A carboxylase (ACC) complex. Biotin carboxylase (BC) catalyzes the carboxylation of biotin on its carrier protein (BCCP) and then the CO(2) group is transferred by the transcarboxylase to acetyl-CoA to form malonyl-CoA. The protein is Acetyl-coenzyme A carboxylase carboxyl transferase subunit beta of Sinorhizobium medicae (strain WSM419) (Ensifer medicae).